A 109-amino-acid polypeptide reads, in one-letter code: RNA-binding protein Hfq (109 aa).

One can recognise a Sm domain in the interval Asp-9–Val-68. A disordered region spans residues Pro-77 to Glu-109.

It belongs to the Hfq family. In terms of assembly, homohexamer.

Functionally, RNA chaperone that binds small regulatory RNA (sRNAs) and mRNAs to facilitate mRNA translational regulation in response to envelope stress, environmental stress and changes in metabolite concentrations. Also binds with high specificity to tRNAs. In Francisella tularensis subsp. holarctica (strain FTNF002-00 / FTA), this protein is RNA-binding protein Hfq.